The chain runs to 266 residues: Killer cell lectin-like receptor 6 (266 aa).

At 1–44 (MSEPEVTYSTVRLHKSSRLQKLVRHEETQGPREAGYRKCSVCWQ) the chain is on the cytoplasmic side. Residues 45–66 (LIVKALGILCFLLLITVAVLAV) form a helical; Signal-anchor for type II membrane protein membrane-spanning segment. At 67–266 (KIFQYGQHNQ…CGKKLDKFPH (200 aa)) the chain is on the extracellular side. 2 N-linked (GlcNAc...) asparagine glycosylation sites follow: Asn-87 and Asn-104. Residues 143–261 (GVKYWFCYRT…SHYCICGKKL (119 aa)) enclose the C-type lectin domain. Intrachain disulfides connect Cys-149/Cys-154, Cys-167/Cys-255, Cys-171/Cys-257, and Cys-236/Cys-249.

As to quaternary structure, homodimer; disulfide-linked.

Its subcellular location is the membrane. In terms of biological role, receptor on natural killer (NK) cells for class I MHC. In Mus musculus (Mouse), this protein is Killer cell lectin-like receptor 6 (Klra6).